Reading from the N-terminus, the 156-residue chain is Gamma-L-glutamyl-butirosin B gamma-glutamyl cyclotransferase (156 aa).

Residue 24 to 27 (YGTL) coordinates substrate. The Proton acceptor role is filled by E89.

Belongs to the gamma-glutamylcyclotransferase family.

It catalyses the reaction gamma-L-glutamyl-butirosin B = butirosin B + 5-oxo-L-proline. It functions in the pathway antibiotic biosynthesis; butirosin biosynthesis. In terms of biological role, cyclotransferase that catalyzes the last step in the biosynthesis of the aminoglycoside antibiotic butirosin B. Cleaves the amide bond via transamidation using the alpha-amine of the terminal gamma-L-glutamate of the side chain, releasing it as the cyclic 5-oxoproline. The protein is Gamma-L-glutamyl-butirosin B gamma-glutamyl cyclotransferase (btrG) of Niallia circulans (Bacillus circulans).